Consider the following 548-residue polypeptide: MAKFMTPVIQDNPSGWGPCAVPEQFRDMPYQPFSKGDRLGKVADWTGATYQDKRYTNKYSSQFGGGSQYAYFHEEDESSFQLVDTARTQKTAYQRNRMRFAQRNLRRDKDRRNMLQFNLQILPKSAKQKERERIRLQKKFQKQFGVRQKWDQKSQKPRDSSVEVRSDWEVKEEMDFPQLMKMRYLEVSEPQDIECCGALEYYDKAFDRITTRSEKPLRSIKRIFHTVTTTDDPVIRKLAKTQGNVFATDAILATLMSCTRSVYSWDIVVQRVGSKLFFDKRDNSDFDLLTVSETANEPPQDEGNSFNSPRNLAMEATYINHNFSQQCLRMGKERYNFPNPNPFVEDDMDKNEIASVAYRYRRWKLGDDIDLIVRCEHDGVMTGANGEVSFINIKTLNEWDSRHCNGVDWRQKLDSQRGAVIATELKNNSYKLARWTCCALLAGSEYLKLGYVSRYHVKDSSRHVILGTQQFKPNEFASQINLSVENAWGILRCVIDICMKLEEGKYLILKDPNKQVIRVYSLPDGTFSSDEDEEEEEEEEEEEEEEET.

Lysine 53 is modified (N6-acetyllysine). Serine 161 carries the phosphoserine modification. The RNA gate stretch occupies residues 285–299 (DFDLLTVSETANEPP). The disordered stretch occupies residues 523–548 (PDGTFSSDEDEEEEEEEEEEEEEEET). Residues serine 528 and serine 529 each carry the phosphoserine modification. Residues 529–548 (SDEDEEEEEEEEEEEEEEET) are compositionally biased toward acidic residues.

Belongs to the eIF-3 subunit D family. As to quaternary structure, component of the eukaryotic translation initiation factor 3 (eIF-3) complex, which is composed of 13 subunits: EIF3A, EIF3B, EIF3C, EIF3D, EIF3E, EIF3F, EIF3G, EIF3H, EIF3I, EIF3J, EIF3K, EIF3L and EIF3M. The eIF-3 complex appears to include 3 stable modules: module A is composed of EIF3A, EIF3B, EIF3G and EIF3I; module B is composed of EIF3F, EIF3H, and EIF3M; and module C is composed of EIF3C, EIF3D, EIF3E, EIF3K and EIF3L. EIF3C of module C binds EIF3B of module A and EIF3H of module B, thereby linking the three modules. EIF3J is a labile subunit that binds to the eIF-3 complex via EIF3B. The eIF-3 complex interacts with RPS6KB1 under conditions of nutrient depletion. Mitogenic stimulation leads to binding and activation of a complex composed of MTOR and RPTOR, leading to phosphorylation and release of RPS6KB1 and binding of EIF4B to eIF-3. In terms of assembly, (Microbial infection) Interacts with Norwalk virus VPg protein.

The protein localises to the cytoplasm. In terms of biological role, mRNA cap-binding component of the eukaryotic translation initiation factor 3 (eIF-3) complex, a complex required for several steps in the initiation of protein synthesis of a specialized repertoire of mRNAs. The eIF-3 complex associates with the 40S ribosome and facilitates the recruitment of eIF-1, eIF-1A, eIF-2:GTP:methionyl-tRNAi and eIF-5 to form the 43S pre-initiation complex (43S PIC). The eIF-3 complex stimulates mRNA recruitment to the 43S PIC and scanning of the mRNA for AUG recognition. The eIF-3 complex is also required for disassembly and recycling of post-termination ribosomal complexes and subsequently prevents premature joining of the 40S and 60S ribosomal subunits prior to initiation. The eIF-3 complex specifically targets and initiates translation of a subset of mRNAs involved in cell proliferation, including cell cycling, differentiation and apoptosis, and uses different modes of RNA stem-loop binding to exert either translational activation or repression. In the eIF-3 complex, EIF3D specifically recognizes and binds the 7-methylguanosine cap of a subset of mRNAs. (Microbial infection) In case of FCV infection, plays a role in the ribosomal termination-reinitiation event leading to the translation of VP2. The protein is Eukaryotic translation initiation factor 3 subunit D of Homo sapiens (Human).